Reading from the N-terminus, the 444-residue chain is Probable glycine dehydrogenase (decarboxylating) subunit 1 (444 aa).

It belongs to the GcvP family. N-terminal subunit subfamily. In terms of assembly, the glycine cleavage system is composed of four proteins: P, T, L and H. In this organism, the P 'protein' is a heterodimer of two subunits.

The enzyme catalyses N(6)-[(R)-lipoyl]-L-lysyl-[glycine-cleavage complex H protein] + glycine + H(+) = N(6)-[(R)-S(8)-aminomethyldihydrolipoyl]-L-lysyl-[glycine-cleavage complex H protein] + CO2. Its function is as follows. The glycine cleavage system catalyzes the degradation of glycine. The P protein binds the alpha-amino group of glycine through its pyridoxal phosphate cofactor; CO(2) is released and the remaining methylamine moiety is then transferred to the lipoamide cofactor of the H protein. This is Probable glycine dehydrogenase (decarboxylating) subunit 1 from Prosthecochloris aestuarii (strain DSM 271 / SK 413).